Consider the following 206-residue polypeptide: CMP-5'-(N-acetyl-N-hydroxy-3-aminopropyl)phosphonate hydrolase (206 aa).

Residues 37–166 (VRAPGAAIIV…RTVTSGTAIG (130 aa)) form the Nudix hydrolase domain. Positions 74–95 (GLVDDREDPAVTAAREAEEETG) match the Nudix box motif. The segment covering 177 to 194 (RQQPGGVQEQPGGAQQQG) has biased composition (low complexity). Residues 177–206 (RQQPGGVQEQPGGAQQQGMNESHSGRTVRG) form a disordered region.

Belongs to the Nudix hydrolase family. Mg(2+) serves as cofactor.

The enzyme catalyses CMP-5'-(N-acetyl-N-hydroxy-3-aminopropyl)phosphonate + H2O = 3-(N-acetyl-N-hydroxy)aminopropylphosphonate + CMP + H(+). Its pathway is antibiotic biosynthesis. In terms of biological role, nucleotide hydrolase involved in the biosynthesis of the phosphonate antibiotic FR-900098, a potent antimalarial agent that acts as an inhibitor of 1-deoxy-D-xylulose 5-phosphate reductoisomerase (DXR), the first enzyme in the nonmevalonate pathway for isoprenoid biosynthesis. Catalyzes the hydrolysis of CMP-5'-(N-acetyl-N-hydroxy-3-aminopropyl)phosphonate (CMP-5'-FR-900098) to produce CMP and the final compound FR-900098. In vitro, has broad substrate specificity and also catalyzes the hydrolysis of all the other CMP-containing intermediates within the pathway and shows low activity toward CTP. This chain is CMP-5'-(N-acetyl-N-hydroxy-3-aminopropyl)phosphonate hydrolase, found in Streptomyces rubellomurinus (strain ATCC 31215).